We begin with the raw amino-acid sequence, 667 residues long: Probable potassium transport system protein Kup (667 aa).

The next 12 membrane-spanning stretches (helical) occupy residues 5-25 (GLLI…LYVM), 47-67 (ISLI…IIAL), 88-108 (AAWL…DGTL), 133-153 (VSNQ…LFSI), 164-184 (AFGP…LINI), 210-230 (AGFA…ALYS), 243-263 (SWPF…VWIL), 287-307 (LASI…LITG), 336-356 (IYIP…VLFF), 367-387 (GLSI…WLVL), 393-413 (LANL…MGSS), and 420-440 (GGYV…VWYF).

Belongs to the HAK/KUP transporter (TC 2.A.72) family.

It is found in the cell membrane. The enzyme catalyses K(+)(in) + H(+)(in) = K(+)(out) + H(+)(out). Transport of potassium into the cell. Likely operates as a K(+):H(+) symporter. The protein is Probable potassium transport system protein Kup of Lactobacillus delbrueckii subsp. bulgaricus (strain ATCC 11842 / DSM 20081 / BCRC 10696 / JCM 1002 / NBRC 13953 / NCIMB 11778 / NCTC 12712 / WDCM 00102 / Lb 14).